The primary structure comprises 351 residues: Nuclear inhibitor of protein phosphatase 1 (351 aa).

The tract at residues 1–142 is interaction with CDC5L, SF3B1 and MELK; that stretch reads MAAAANSGSS…LPSAVKGDEK (142 aa). Residues 49–101 enclose the FHA domain; that stretch reads YLFGRNPDLCDFTIDHQSCSRVHAALVYHKHLKRVFLIDLNSTHGTFLGHIRL. Residues 143 to 224 are interaction with EED; it reads MGGEDDELKG…VDPSVGRFRN (82 aa). The residue at position 161 (Thr-161) is a Phosphothreonine; by CK2; in vitro. Position 178 is a phosphoserine; by PKA; in vitro (Ser-178). Short sequence motifs (nuclear localization signal) lie at residues 185–209 and 210–240; these read GNLD…DDEI and INPE…RVEG. Residues 191–200 form an involved in PP-1 inhibition region; that stretch reads RPKRKRKNSR. Position 199 is a phosphoserine (Ser-199). The involved in PP-1 binding stretch occupies residues 200-203; it reads RVTF. Residue Ser-204 is modified to Phosphoserine. A Phosphoserine modification is found at Ser-249. At Tyr-264 the chain carries Phosphotyrosine. The interval 310-329 is interaction with EED; the sequence is AVNMNPAPNPAVYNPEAVNE. Residues 316–351 form a disordered region; sequence APNPAVYNPEAVNEPKKKKYAKEAWPGKKPTPSLLI. The RNA-binding stretch occupies residues 330-351; the sequence is PKKKKYAKEAWPGKKPTPSLLI. Positions 331–337 are involved in PP-1 inhibition; the sequence is KKKKYAK. Tyr-335 is modified (phosphotyrosine).

As to quaternary structure, interacts with phosphorylated CDC5L, SF3B1 and MELK. Interacts with EED. Part of a complex consisting of PPP1R8, EED, HDAC2 and PP-1. Part of the spliceosome. Interacts with PPP1CA, PPP1CB and PPP1CC. Post-translationally, the N-terminus is blocked. In terms of processing, inactivated by phosphorylation on Ser-199 or Ser-204.

It localises to the nucleus. Its subcellular location is the nucleus speckle. Functionally, inhibitor subunit of the major nuclear protein phosphatase-1 (PP-1). It has RNA-binding activity but does not cleave RNA and may target PP-1 to RNA-associated substrates. May also be involved in pre-mRNA splicing. Binds DNA and might act as a transcriptional repressor. Seems to be required for cell proliferation. This is Nuclear inhibitor of protein phosphatase 1 (PPP1R8) from Bos taurus (Bovine).